Consider the following 443-residue polypeptide: ATP-dependent protease ATPase subunit HslU (443 aa).

Residues Ile18, 60-65 (GVGKTE), Asp256, Glu321, and Arg393 each bind ATP.

Belongs to the ClpX chaperone family. HslU subfamily. In terms of assembly, a double ring-shaped homohexamer of HslV is capped on each side by a ring-shaped HslU homohexamer. The assembly of the HslU/HslV complex is dependent on binding of ATP.

The protein resides in the cytoplasm. Its function is as follows. ATPase subunit of a proteasome-like degradation complex; this subunit has chaperone activity. The binding of ATP and its subsequent hydrolysis by HslU are essential for unfolding of protein substrates subsequently hydrolyzed by HslV. HslU recognizes the N-terminal part of its protein substrates and unfolds these before they are guided to HslV for hydrolysis. The chain is ATP-dependent protease ATPase subunit HslU from Pectobacterium atrosepticum (strain SCRI 1043 / ATCC BAA-672) (Erwinia carotovora subsp. atroseptica).